The following is a 513-amino-acid chain: MIQIKRALVSVSDKTGITEICSFLTKHGVEILSTGGTYDALSKAGIAVKKVDEFTGFPEILHGRVKTLHPKIHGGLLGDTTNPDHVKQMESNGIVPITLVIVNLYPFVKTVMKPDVTLEDAIENIDIGGPSMLRSAAKNHKNVVVLTDPKDYESFQNEFTTNNGKISRETAFGYAAKVFSETASYDSAISSYFNKRLGIKYPDKITFAFNKKQKLRYGENPHQDAAFYEPLFLKSQFEALQGKELSFNNMLDFDAAFHVASLLPKNAVSIVKHLNPCGIAFGETVLESFELARKTDPISAFGGIIGIHGRVEKESAEEITKNFVEGVIAESFSNEALEIFAKKPNIRLIPIAKFDEALDELDLRSLHHGLLIQNRDYDLITKDKLKIVSKKQPTEDDLEGLMFAWNCVKFIKSNAIVYTDQNSTLGIGAGQMSRVDSVELGAMKAQKVGLSVVGSYVGSDAFFPFRDGIDAIAKVGAKAIIQPGGSIRDEEVIQAADEHGLIMVFTGMRHFRH.

The 147-residue stretch at 1 to 147 folds into the MGS-like domain; it reads MIQIKRALVS…KNHKNVVVLT (147 aa).

It belongs to the PurH family.

It carries out the reaction (6R)-10-formyltetrahydrofolate + 5-amino-1-(5-phospho-beta-D-ribosyl)imidazole-4-carboxamide = 5-formamido-1-(5-phospho-D-ribosyl)imidazole-4-carboxamide + (6S)-5,6,7,8-tetrahydrofolate. The catalysed reaction is IMP + H2O = 5-formamido-1-(5-phospho-D-ribosyl)imidazole-4-carboxamide. It participates in purine metabolism; IMP biosynthesis via de novo pathway; 5-formamido-1-(5-phospho-D-ribosyl)imidazole-4-carboxamide from 5-amino-1-(5-phospho-D-ribosyl)imidazole-4-carboxamide (10-formyl THF route): step 1/1. It functions in the pathway purine metabolism; IMP biosynthesis via de novo pathway; IMP from 5-formamido-1-(5-phospho-D-ribosyl)imidazole-4-carboxamide: step 1/1. The chain is Bifunctional purine biosynthesis protein PurH from Leptospira biflexa serovar Patoc (strain Patoc 1 / Ames).